The following is a 278-amino-acid chain: Coiled-coil domain-containing protein 121 (278 aa).

Coiled coils occupy residues M1–L30 and Q105–A243. The disordered stretch occupies residues Q253–K278.

This chain is Coiled-coil domain-containing protein 121 (CCDC121), found in Homo sapiens (Human).